Here is a 131-residue protein sequence, read N- to C-terminus: Small ribosomal subunit protein bS6 (131 aa).

A disordered region spans residues 92–131 (RVDEHKDGPSVQMQKRDERERGDRGDRGERRERRDRDDRN).

It belongs to the bacterial ribosomal protein bS6 family.

Its function is as follows. Binds together with bS18 to 16S ribosomal RNA. This is Small ribosomal subunit protein bS6 from Paracoccus denitrificans (strain Pd 1222).